Reading from the N-terminus, the 492-residue chain is KAT8 regulatory NSL complex subunit 2 (492 aa).

Lys-78 is covalently cross-linked (Glycyl lysine isopeptide (Lys-Gly) (interchain with G-Cter in SUMO2)). The segment at 126–182 (ELGSQTPESSRSEASRILDEDSWSDGEQEPITVDQTWRGDPDSEADSIDSDQEDPLK) is disordered. Thr-131 bears the Phosphothreonine mark. The span at 135 to 144 (SRSEASRILD) shows a compositional bias: basic and acidic residues. Ser-147, Ser-149, Ser-168, Ser-172, and Ser-175 each carry phosphoserine. Over residues 167 to 178 (DSEADSIDSDQE) the composition is skewed to acidic residues. The interval 308–364 (DVRCSNQSLPMTRHCLTHICQDTNQVLFKCCQGSEEVPCNKPVPVSLSEDPCCPLHF) is required for interaction with other NSL complex members. Positions 455–492 (AGDGCRSQGSRNSEKASAPLSQSGLATANGKPEPTSIS) are disordered.

In terms of assembly, component of the NSL complex at least composed of KAT8/MOF, KANSL1, KANSL2, KANSL3, MCRS1, PHF20, OGT1/OGT, WDR5 and HCFC1.

It localises to the nucleus. It is found in the mitochondrion. In terms of biological role, non-catalytic component of the NSL histone acetyltransferase complex, a multiprotein complex that mediates histone H4 acetylation at 'Lys-5'- and 'Lys-8' (H4K5ac and H4K8ac) at transcription start sites and promotes transcription initiation. Required for NSL complex stability and for transcription of intraciliary transport genes in both ciliated and non-ciliated cells by regulating histone H4 acetylation at 'Lys-5'- and 'Lys-12' (H4K5ac and H4K12ac). This is necessary for cilium assembly in ciliated cells and for organization of the microtubule cytoskeleton in non-ciliated cells. Required within the NSL complex to maintain nuclear architecture stability by promoting KAT8-mediated acetylation of lamin LMNA. This chain is KAT8 regulatory NSL complex subunit 2 (KANSL2), found in Homo sapiens (Human).